Reading from the N-terminus, the 78-residue chain is Small ribosomal subunit protein bS18 (78 aa).

The protein belongs to the bacterial ribosomal protein bS18 family. Part of the 30S ribosomal subunit. Forms a tight heterodimer with protein bS6.

Binds as a heterodimer with protein bS6 to the central domain of the 16S rRNA, where it helps stabilize the platform of the 30S subunit. The protein is Small ribosomal subunit protein bS18 of Ligilactobacillus salivarius (strain UCC118) (Lactobacillus salivarius).